The sequence spans 456 residues: Carnosine N-methyltransferase unmet (456 aa).

The S-adenosyl-L-methionine site is built by Arg-154, Gly-195, Glu-216, Asp-282, Phe-283, and Cys-299. Carnosine-binding residues include Asp-303, His-334, and Tyr-385. The span at 402–418 (RGKRKASREPHDLIVRE) shows a compositional bias: basic and acidic residues. The tract at residues 402–456 (RGKRKASREPHDLIVREDSEEEGEQQPERNETEEKQQLKPLATANCETEIKEQPS) is disordered. Residues Ser-408 and Ser-420 each carry the phosphoserine modification. Positions 427–438 (QPERNETEEKQQ) are enriched in basic and acidic residues.

This sequence belongs to the carnosine N-methyltransferase family. As to quaternary structure, associates with the GATOR2 complex; the interaction is probably direct and is inhibited by S-adenosyl-L-methionine binding. Associates with the GATOR1 complex; the interaction is probably indirect and mediated by the GATOR2 complex.

It catalyses the reaction carnosine + S-adenosyl-L-methionine = anserine + S-adenosyl-L-homocysteine + H(+). In terms of biological role, S-adenosyl-L-methionine-binding protein that acts as a sensor to signal methionine availability to the mTORC1 signaling pathway. Associates with the GATOR2 complex in the absence of methionine to inhibit mTORC1 signaling, but dissociates in the presence of the methionine derivative S-adenosyl-L-methionine; S-adenosyl-L-homocysteine binding does not induce dissociation. Required for mTORC1 pathway response to methionine starvation. Exerts a protective function on developing egg chambers by inhibiting mTORC1 signaling under starvation conditions. May also function as a N-methyltransferase that mediates the formation of anserine (beta-alanyl-N(Pi)-methyl-L-histidine) from carnosine. It is unclear whether this protein has retained N-methyltransferase activity or if it is an evolutionary intermediate whose substrate binding ability has been co-opted to function as a nutrient sensor for mTORC1 signaling. The protein is Carnosine N-methyltransferase unmet of Drosophila melanogaster (Fruit fly).